The following is a 136-amino-acid chain: Fatty acid-binding protein homolog 5 (136 aa).

Residues Arg-111 and 131 to 133 (RAY) each bind a fatty acid.

The protein belongs to the calycin superfamily. Fatty-acid binding protein (FABP) family.

This chain is Fatty acid-binding protein homolog 5 (lbp-5), found in Caenorhabditis elegans.